The primary structure comprises 315 residues: MSGAATTEGAVTRFDAALVGTEARDWFALLKPRVISLVVFTGAAGLAMAPGPINPLIAAVSILCICMASGAAGAINMWYDRDIDAVMTRTARRPIPDGRIRDDQALGFGIGLSVASVLLMWLAANALAAFILAFSIFFYAVIYTMWLKRSTPQNIVIGGAAGAFPPMIGWAATTGSLGVLPVVMFAIVFLWTPPHFWSLSLYACKDYGRAGIPMLPVVRGARHTRWQILFYTLILSAVSLVPSFLHQAGWLYTGVASLLDAGFVACAVGVLTDRQDEAGVSLTGDRPARRAFRYSLAYLFLLFCGLLADHFLIMR.

9 helical membrane passes run 34-54, 55-75, 105-125, 127-147, 155-175, 177-197, 226-246, 251-271, and 294-314; these read VISL…GPIN, PLIA…AGAI, ALGF…LAAN, LAAF…TMWL, IVIG…ATTG, LGVL…PHFW, WQIL…SFLH, LYTG…VGVL, and YSLA…FLIM.

The protein belongs to the UbiA prenyltransferase family. Protoheme IX farnesyltransferase subfamily.

The protein localises to the cell inner membrane. It carries out the reaction heme b + (2E,6E)-farnesyl diphosphate + H2O = Fe(II)-heme o + diphosphate. It functions in the pathway porphyrin-containing compound metabolism; heme O biosynthesis; heme O from protoheme: step 1/1. Functionally, converts heme B (protoheme IX) to heme O by substitution of the vinyl group on carbon 2 of heme B porphyrin ring with a hydroxyethyl farnesyl side group. In Gluconacetobacter diazotrophicus (strain ATCC 49037 / DSM 5601 / CCUG 37298 / CIP 103539 / LMG 7603 / PAl5), this protein is Protoheme IX farnesyltransferase.